Reading from the N-terminus, the 307-residue chain is Oxygen-dependent coproporphyrinogen-III oxidase (307 aa).

Ser-99 serves as a coordination point for substrate. Residues His-103 and His-113 each contribute to the a divalent metal cation site. His-113 serves as the catalytic Proton donor. 115 to 117 provides a ligand contact to substrate; that stretch reads NVR. A divalent metal cation-binding residues include His-152 and His-182. The segment at 247-282 is important for dimerization; the sequence is YVEFNLVFDRGTLFGLQSGGRTESILMSMPPVANWR. Substrate is bound at residue 265–267; the sequence is GGR.

The protein belongs to the aerobic coproporphyrinogen-III oxidase family. As to quaternary structure, homodimer. It depends on a divalent metal cation as a cofactor.

The protein localises to the cytoplasm. The catalysed reaction is coproporphyrinogen III + O2 + 2 H(+) = protoporphyrinogen IX + 2 CO2 + 2 H2O. Its pathway is porphyrin-containing compound metabolism; protoporphyrin-IX biosynthesis; protoporphyrinogen-IX from coproporphyrinogen-III (O2 route): step 1/1. In terms of biological role, involved in the heme biosynthesis. Catalyzes the aerobic oxidative decarboxylation of propionate groups of rings A and B of coproporphyrinogen-III to yield the vinyl groups in protoporphyrinogen-IX. This chain is Oxygen-dependent coproporphyrinogen-III oxidase, found in Burkholderia lata (strain ATCC 17760 / DSM 23089 / LMG 22485 / NCIMB 9086 / R18194 / 383).